Consider the following 355-residue polypeptide: Methylthioribose-1-phosphate isomerase (355 aa).

Substrate is bound by residues 50–52 (RGA), R93, and Q198. D239 functions as the Proton donor in the catalytic mechanism. 249-250 (NK) serves as a coordination point for substrate.

Belongs to the eIF-2B alpha/beta/delta subunits family. MtnA subfamily. In terms of assembly, homodimer.

It carries out the reaction 5-(methylsulfanyl)-alpha-D-ribose 1-phosphate = 5-(methylsulfanyl)-D-ribulose 1-phosphate. The protein operates within amino-acid biosynthesis; L-methionine biosynthesis via salvage pathway; L-methionine from S-methyl-5-thio-alpha-D-ribose 1-phosphate: step 1/6. In terms of biological role, catalyzes the interconversion of methylthioribose-1-phosphate (MTR-1-P) into methylthioribulose-1-phosphate (MTRu-1-P). In Geobacillus kaustophilus (strain HTA426), this protein is Methylthioribose-1-phosphate isomerase.